The following is a 504-amino-acid chain: Cytochrome P450 6B2 (504 aa).

A heme-binding site is contributed by Cys445.

Belongs to the cytochrome P450 family. Heme is required as a cofactor.

Its subcellular location is the endoplasmic reticulum membrane. It is found in the microsome membrane. It carries out the reaction an organic molecule + reduced [NADPH--hemoprotein reductase] + O2 = an alcohol + oxidized [NADPH--hemoprotein reductase] + H2O + H(+). This chain is Cytochrome P450 6B2 (CYP6B2), found in Helicoverpa armigera (Cotton bollworm).